The following is a 136-amino-acid chain: Small ribosomal subunit protein uS11 (136 aa).

2 disordered regions span residues 1-20 (MAQR…NVTN) and 115-136 (VTPQ…EKAR). Over residues 125–136 (PPKRVLKREKAR) the composition is skewed to basic residues.

This sequence belongs to the universal ribosomal protein uS11 family. As to quaternary structure, part of the 30S ribosomal subunit. Interacts with proteins S7 and S18. Binds to IF-3.

Located on the platform of the 30S subunit, it bridges several disparate RNA helices of the 16S rRNA. Forms part of the Shine-Dalgarno cleft in the 70S ribosome. This Mycoplasmopsis pulmonis (strain UAB CTIP) (Mycoplasma pulmonis) protein is Small ribosomal subunit protein uS11.